Consider the following 347-residue polypeptide: F-box/kelch-repeat protein At5g03020 (347 aa).

The segment at 1–21 is disordered; it reads MTEEMSKESPPPPPTSFSSLP. The region spanning 14 to 62 is the F-box domain; sequence PTSFSSLPDDVALDCRARISRFHYPTLSLVSKGFRTLIASPELEATRSF. 2 Kelch repeats span residues 119–165 and 167–215; these read QIYI…VIDG and IYVI…KKKH.

The sequence is that of F-box/kelch-repeat protein At5g03020 from Arabidopsis thaliana (Mouse-ear cress).